Consider the following 319-residue polypeptide: Phospho-N-acetylmuramoyl-pentapeptide-transferase (319 aa).

The next 9 membrane-spanning stretches (helical) occupy residues 5-25 (LIAF…LIIW), 51-71 (TMGG…ICAY), 79-99 (VWIL…DDGL), 119-139 (LLVA…FALY), 149-169 (VVLF…AVNL), 173-193 (LDGL…WLAF), 197-217 (NFGV…FFMF), 224-246 (IFMG…IFLG), and 299-319 (VDLV…MIWG).

It belongs to the glycosyltransferase 4 family. MraY subfamily. Requires Mg(2+) as cofactor.

The protein localises to the cell membrane. It catalyses the reaction UDP-N-acetyl-alpha-D-muramoyl-L-alanyl-gamma-D-glutamyl-L-lysyl-D-alanyl-D-alanine + di-trans,octa-cis-undecaprenyl phosphate = Mur2Ac(oyl-L-Ala-gamma-D-Glu-L-Lys-D-Ala-D-Ala)-di-trans,octa-cis-undecaprenyl diphosphate + UMP. It participates in cell wall biogenesis; peptidoglycan biosynthesis. Its function is as follows. Catalyzes the initial step of the lipid cycle reactions in the biosynthesis of the cell wall peptidoglycan: transfers peptidoglycan precursor phospho-MurNAc-pentapeptide from UDP-MurNAc-pentapeptide onto the lipid carrier undecaprenyl phosphate, yielding undecaprenyl-pyrophosphoryl-MurNAc-pentapeptide, known as lipid I. The sequence is that of Phospho-N-acetylmuramoyl-pentapeptide-transferase from Lactobacillus delbrueckii subsp. bulgaricus (strain ATCC BAA-365 / Lb-18).